Here is a 223-residue protein sequence, read N- to C-terminus: MVTLSSPSPSLSCVENVTCKSSHVSRVLISGTDNINHGESSEAKILRDVHISERLLEDFTELARENTEKDLETCGTLAAFLERGIFYVTTLIIPKQESTSNSCQAMNEVEVFSIQNERELYPVGWIHTHPSQGCFMSSVDLHTHYSYQVMVPEAFAIVVAPTDSSKSYGIFKLTDPGGMEVLRGCSETGFHPHKEPEDGNPVYEHCSNVYKNSNLRFEIFDLR.

An MPN domain is found at 49–177 (VHISERLLED…YGIFKLTDPG (129 aa)). Zn(2+) contacts are provided by His-127, His-129, Asp-140, His-142, Cys-185, His-191, and His-193. Residues 127-140 (HTHPSQGCFMSSVD) carry the JAMM motif motif.

It belongs to the peptidase M67C family. Zn(2+) serves as cofactor.

Functionally, zinc metalloprotease that cleaves 'Lys-48'- and 'Lys-63'-linked polyubiquitin chains. The protein is AMSH-like ubiquitin thioesterase 2 (AMSH2) of Arabidopsis thaliana (Mouse-ear cress).